A 150-amino-acid chain; its full sequence is Lipoprotein signal peptidase (150 aa).

3 helical membrane passes run 8-28 (FYAL…LAHA), 58-78 (GFSW…GWFL), and 81-101 (TTGS…NVFD). Catalysis depends on residues D116 and D132. Residues 126–146 (VVFNIADLFILAGVFGTFLFL) traverse the membrane as a helical segment.

It belongs to the peptidase A8 family.

The protein resides in the cell membrane. The catalysed reaction is Release of signal peptides from bacterial membrane prolipoproteins. Hydrolyzes -Xaa-Yaa-Zaa-|-(S,diacylglyceryl)Cys-, in which Xaa is hydrophobic (preferably Leu), and Yaa (Ala or Ser) and Zaa (Gly or Ala) have small, neutral side chains.. Its pathway is protein modification; lipoprotein biosynthesis (signal peptide cleavage). Functionally, this protein specifically catalyzes the removal of signal peptides from prolipoproteins. In Tropheryma whipplei (strain Twist) (Whipple's bacillus), this protein is Lipoprotein signal peptidase.